The chain runs to 141 residues: Large ribosomal subunit protein uL11 (141 aa).

It belongs to the universal ribosomal protein uL11 family. As to quaternary structure, part of the ribosomal stalk of the 50S ribosomal subunit. Interacts with L10 and the large rRNA to form the base of the stalk. L10 forms an elongated spine to which L12 dimers bind in a sequential fashion forming a multimeric L10(L12)X complex. In terms of processing, one or more lysine residues are methylated.

Its function is as follows. Forms part of the ribosomal stalk which helps the ribosome interact with GTP-bound translation factors. This chain is Large ribosomal subunit protein uL11, found in Synechococcus sp. (strain CC9605).